Reading from the N-terminus, the 119-residue chain is Holo-[acyl-carrier-protein] synthase (119 aa).

Mg(2+)-binding residues include Asp-7 and Glu-56.

It belongs to the P-Pant transferase superfamily. AcpS family. It depends on Mg(2+) as a cofactor.

The protein resides in the cytoplasm. The catalysed reaction is apo-[ACP] + CoA = holo-[ACP] + adenosine 3',5'-bisphosphate + H(+). Its function is as follows. Transfers the 4'-phosphopantetheine moiety from coenzyme A to a Ser of acyl-carrier-protein. This is Holo-[acyl-carrier-protein] synthase from Chlamydia trachomatis serovar D (strain ATCC VR-885 / DSM 19411 / UW-3/Cx).